Consider the following 60-residue polypeptide: Large ribosomal subunit protein uL30 (60 aa).

The protein belongs to the universal ribosomal protein uL30 family. In terms of assembly, part of the 50S ribosomal subunit.

This chain is Large ribosomal subunit protein uL30, found in Dehalococcoides mccartyi (strain ATCC BAA-2100 / JCM 16839 / KCTC 5957 / BAV1).